The chain runs to 398 residues: Aurofusarin biosynthesis regulatory protein aurR1 (398 aa).

The segment at residues 18–45 (CDNCAKSKVRCGKEQPWCQRCERRGQVC) is a DNA-binding region (zn(2)-C6 fungal-type). Disordered regions lie at residues 52-73 (RSRKRTLDAAHPESDQRNGTPP) and 275-314 (AATIDDHTSPTPSNDGKDTERSVSRDTNVSQDGSEPSSLI). Composition is skewed to basic and acidic residues over residues 56–67 (RTLDAAHPESDQ) and 289–298 (DGKDTERSVS). Residues 299–311 (RDTNVSQDGSEPS) show a composition bias toward polar residues.

It is found in the nucleus. Transcription factor that specifically regulates the expression of the gene cluster that mediates the biosynthesis of aurofusarin, a red mycelium pigment which is acting as a mycotoxin. In Gibberella zeae (strain ATCC MYA-4620 / CBS 123657 / FGSC 9075 / NRRL 31084 / PH-1) (Wheat head blight fungus), this protein is Aurofusarin biosynthesis regulatory protein aurR1.